A 620-amino-acid polypeptide reads, in one-letter code: uncharacterized protein (620 aa).

This sequence belongs to the chlamydial CPn_0512/CT_425/TC_0708 family.

This is an uncharacterized protein from Chlamydia pneumoniae (Chlamydophila pneumoniae).